Reading from the N-terminus, the 768-residue chain is Pentatricopeptide repeat-containing protein At3g53360, mitochondrial (768 aa).

The N-terminal 70 residues, 1 to 70 (MATMLRLGAR…SSFKIRLRTY (70 aa)), are a transit peptide targeting the mitochondrion. PPR repeat units follow at residues 30–60 (TEEL…AQKN), 66–100 (RLRT…NCKY), 101–131 (DTIL…MPER), 132–166 (NLVS…DLVP), 167–201 (DQFA…ESSS), 202–232 (HLIA…IPMK), 233–267 (DLIS…GVFH), 269–303 (NEYI…ELAG), 304–334 (NAIA…IERP), 335–369 (DTAS…GFIP), 370–404 (DAIS…GFLA), 405–435 (DLTV…FRNN), 437–471 (DSVS…ECEP), 472–506 (DHIT…GLAP), 507–537 (EQFI…MDNR), 538–572 (DVVS…GIEP), 573–608 (NHVT…GISP), and 609–639 (TKEH…MKLE). Positions 644-719 (VWKTLLSACK…IPGQSWIEIE (76 aa)) are type E motif. Residues 720–750 (DKIHIFFAEDIFHPERDDIYTVLHNIWSQML) are type E(+) motif.

Belongs to the PPR family. PCMP-E subfamily.

It is found in the mitochondrion. The sequence is that of Pentatricopeptide repeat-containing protein At3g53360, mitochondrial (PCMP-E86) from Arabidopsis thaliana (Mouse-ear cress).